The primary structure comprises 154 residues: Ribosome maturation factor RimP (154 aa).

This sequence belongs to the RimP family.

The protein localises to the cytoplasm. In terms of biological role, required for maturation of 30S ribosomal subunits. This chain is Ribosome maturation factor RimP, found in Clostridium kluyveri (strain ATCC 8527 / DSM 555 / NBRC 12016 / NCIMB 10680 / K1).